The sequence spans 78 residues: MSLLGMFGHSSQKSATLARERLKLVLSHERTANIPYLEDMQKEILQVVQKYTRSSKIEFSTNSNQNINTLEVEITLGN.

This sequence belongs to the MinE family.

Prevents the cell division inhibition by proteins MinC and MinD at internal division sites while permitting inhibition at polar sites. This ensures cell division at the proper site by restricting the formation of a division septum at the midpoint of the long axis of the cell. This is Cell division topological specificity factor from Helicobacter hepaticus (strain ATCC 51449 / 3B1).